Here is a 154-residue protein sequence, read N- to C-terminus: SsrA-binding protein (154 aa).

This sequence belongs to the SmpB family.

The protein resides in the cytoplasm. Functionally, required for rescue of stalled ribosomes mediated by trans-translation. Binds to transfer-messenger RNA (tmRNA), required for stable association of tmRNA with ribosomes. tmRNA and SmpB together mimic tRNA shape, replacing the anticodon stem-loop with SmpB. tmRNA is encoded by the ssrA gene; the 2 termini fold to resemble tRNA(Ala) and it encodes a 'tag peptide', a short internal open reading frame. During trans-translation Ala-aminoacylated tmRNA acts like a tRNA, entering the A-site of stalled ribosomes, displacing the stalled mRNA. The ribosome then switches to translate the ORF on the tmRNA; the nascent peptide is terminated with the 'tag peptide' encoded by the tmRNA and targeted for degradation. The ribosome is freed to recommence translation, which seems to be the essential function of trans-translation. This is SsrA-binding protein from Gluconacetobacter diazotrophicus (strain ATCC 49037 / DSM 5601 / CCUG 37298 / CIP 103539 / LMG 7603 / PAl5).